We begin with the raw amino-acid sequence, 318 residues long: Methionyl-tRNA formyltransferase (318 aa).

111–114 (SLLP) is a binding site for (6S)-5,6,7,8-tetrahydrofolate.

It belongs to the Fmt family.

The catalysed reaction is L-methionyl-tRNA(fMet) + (6R)-10-formyltetrahydrofolate = N-formyl-L-methionyl-tRNA(fMet) + (6S)-5,6,7,8-tetrahydrofolate + H(+). Attaches a formyl group to the free amino group of methionyl-tRNA(fMet). The formyl group appears to play a dual role in the initiator identity of N-formylmethionyl-tRNA by promoting its recognition by IF2 and preventing the misappropriation of this tRNA by the elongation apparatus. In Chlorobium limicola (strain DSM 245 / NBRC 103803 / 6330), this protein is Methionyl-tRNA formyltransferase.